We begin with the raw amino-acid sequence, 89 residues long: Putative defensin-like protein 230 (89 aa).

The N-terminal stretch at methionine 1–alanine 26 is a signal peptide. 4 disulfides stabilise this stretch: cysteine 30–cysteine 84, cysteine 40–cysteine 65, cysteine 48–cysteine 78, and cysteine 63–cysteine 80.

Belongs to the DEFL family.

It localises to the secreted. This chain is Putative defensin-like protein 230 (SCRL24), found in Arabidopsis thaliana (Mouse-ear cress).